The primary structure comprises 254 residues: tRNA uridine(34) hydroxylase (254 aa).

The Rhodanese domain maps to 123–217; the sequence is QDPNVILLDT…YLESIPESES (95 aa). Catalysis depends on C177, which acts as the Cysteine persulfide intermediate.

It belongs to the TrhO family.

It catalyses the reaction uridine(34) in tRNA + AH2 + O2 = 5-hydroxyuridine(34) in tRNA + A + H2O. In terms of biological role, catalyzes oxygen-dependent 5-hydroxyuridine (ho5U) modification at position 34 in tRNAs. The chain is tRNA uridine(34) hydroxylase from Legionella pneumophila (strain Paris).